A 289-amino-acid polypeptide reads, in one-letter code: 4-diphosphocytidyl-2-C-methyl-D-erythritol kinase (289 aa).

K11 is a catalytic residue. ATP is bound at residue 93-103; that stretch reads PLAAGLAGGSA. D135 is a catalytic residue.

The protein belongs to the GHMP kinase family. IspE subfamily.

It catalyses the reaction 4-CDP-2-C-methyl-D-erythritol + ATP = 4-CDP-2-C-methyl-D-erythritol 2-phosphate + ADP + H(+). It functions in the pathway isoprenoid biosynthesis; isopentenyl diphosphate biosynthesis via DXP pathway; isopentenyl diphosphate from 1-deoxy-D-xylulose 5-phosphate: step 3/6. In terms of biological role, catalyzes the phosphorylation of the position 2 hydroxy group of 4-diphosphocytidyl-2C-methyl-D-erythritol. In Thermoanaerobacter sp. (strain X514), this protein is 4-diphosphocytidyl-2-C-methyl-D-erythritol kinase.